Here is a 142-residue protein sequence, read N- to C-terminus: uncharacterized protein (142 aa).

The disordered stretch occupies residues M1–I31. Residues V11–I29 are compositionally biased toward acidic residues.

This is an uncharacterized protein from Acidianus sp. F28 (AFV-2).